The sequence spans 446 residues: Histidine--tRNA ligase (446 aa).

The protein belongs to the class-II aminoacyl-tRNA synthetase family. In terms of assembly, homodimer.

Its subcellular location is the cytoplasm. The catalysed reaction is tRNA(His) + L-histidine + ATP = L-histidyl-tRNA(His) + AMP + diphosphate + H(+). The polypeptide is Histidine--tRNA ligase (Paraburkholderia xenovorans (strain LB400)).